A 220-amino-acid polypeptide reads, in one-letter code: Deoxyribose-phosphate aldolase (220 aa).

The active-site Proton donor/acceptor is Asp89. Lys151 serves as the catalytic Schiff-base intermediate with acetaldehyde. Residue Lys180 is the Proton donor/acceptor of the active site.

It belongs to the DeoC/FbaB aldolase family. DeoC type 1 subfamily.

It localises to the cytoplasm. The catalysed reaction is 2-deoxy-D-ribose 5-phosphate = D-glyceraldehyde 3-phosphate + acetaldehyde. The protein operates within carbohydrate degradation; 2-deoxy-D-ribose 1-phosphate degradation; D-glyceraldehyde 3-phosphate and acetaldehyde from 2-deoxy-alpha-D-ribose 1-phosphate: step 2/2. Its function is as follows. Catalyzes a reversible aldol reaction between acetaldehyde and D-glyceraldehyde 3-phosphate to generate 2-deoxy-D-ribose 5-phosphate. This chain is Deoxyribose-phosphate aldolase, found in Streptococcus suis (strain 98HAH33).